A 334-amino-acid polypeptide reads, in one-letter code: L-lactate dehydrogenase B chain (334 aa).

NAD(+) is bound by residues 30-58 (GQVGMACAVSILLRDLCDELALVDVMEDR) and Arg-100. Substrate-binding residues include Arg-107, Asn-139, and Arg-170. Asn-139 lines the NAD(+) pocket. The Proton acceptor role is filled by His-194. Substrate is bound at residue Thr-249.

Belongs to the LDH/MDH superfamily. LDH family. As to quaternary structure, homotetramer.

It localises to the cytoplasm. The catalysed reaction is (S)-lactate + NAD(+) = pyruvate + NADH + H(+). The protein operates within fermentation; pyruvate fermentation to lactate; (S)-lactate from pyruvate: step 1/1. Functionally, interconverts simultaneously and stereospecifically pyruvate and lactate with concomitant interconversion of NADH and NAD(+). In Fundulus heteroclitus (Killifish), this protein is L-lactate dehydrogenase B chain (ldhb).